Reading from the N-terminus, the 100-residue chain is Replication restart protein PriB (100 aa).

Positions 4 to 99 (TNLVSLAALI…LRIQNIKEYK (96 aa)) constitute an SSB domain.

It belongs to the PriB family. In terms of assembly, homodimer. Component of the replication restart primosome. Primosome assembly occurs via a 'hand-off' mechanism. PriA binds to replication forks, subsequently PriB then DnaT bind; DnaT then displaces ssDNA to generate the helicase loading substrate. Interacts with PriA with high affinity, independent of DNA presence.

PriA:PriB complex-catalyzed duplex DNA winding is inhibited by CGS 15943 (CHEBI:131351); PriA is the drug target. Stimulates the DNA unwinding activity of PriA helicase, which does not seem to require single-stranded (ss)DNA-binding by PriB. Activates DNA-dependent ATP hydrolysis catalyzed by PriA. Weakly binds ssDNA. Weakly binds double-stranded (ds)DNA, a partial duplex DNA with a 3' ssDNA overhang, and a forked DNA structure with fully duplex leading and lagging strand arms in vitro. In terms of biological role, involved in the restart of stalled replication forks, which reloads the replicative helicase on sites other than the origin of replication; the PriA-PriB pathway is the major replication restart pathway. During primosome assembly it facilitates complex formation between PriA and DnaT on DNA; stabilizes PriA on DNA. Stimulates the DNA unwinding activity of PriA helicase. This is Replication restart protein PriB from Neisseria gonorrhoeae (strain ATCC 700825 / FA 1090).